Consider the following 533-residue polypeptide: DnaJ homolog subfamily C member 21 (533 aa).

The J domain occupies 3–70 (CHYEALGVRR…ERAWYDNHRE (68 aa)). Disordered regions lie at residues 278–311 (QFGDGSGEDEAEDQELRDGQDGKDSDEAEDAELY), 327–473 (KAMR…RVPA), and 503–533 (KATGHARAPSSSTSLNSVTNSRNKKEKRKNR). Phosphoserine is present on residues S283 and S302. The span at 291–302 (QELRDGQDGKDS) shows a compositional bias: basic and acidic residues. The C2H2-type 1 zinc finger occupies 315 to 339 (YCPACDKSFKTEKAMRNHEKSKKHR). Residues 357–369 (SGPQTDENSLNAN) are compositionally biased toward polar residues. A Phosphoserine modification is found at S370. The span at 381 to 392 (KLSRKQKKKKQK) shows a compositional bias: basic residues. Positions 393-403 (PAQNYDDNFNE) are enriched in polar residues. The span at 455–464 (SKPKGKKAKD) shows a compositional bias: basic residues. The C2H2-type 2 zinc-finger motif lies at 484-508 (SCTTCHSEFPSRNKLFDHLKATGHA). S512 bears the Phosphoserine mark. A compositionally biased stretch (low complexity) spans 512–523 (SSSTSLNSVTNS). Basic residues predominate over residues 524–533 (RNKKEKRKNR).

Interacts with HSPA8, PA2G4 and ZNF622.

It is found in the cytoplasm. The protein resides in the nucleus. The protein localises to the nucleolus. May act as a co-chaperone for HSP70. May play a role in ribosomal RNA (rRNA) biogenesis, possibly in the maturation of the 60S subunit. Binds the precursor 45S rRNA. The chain is DnaJ homolog subfamily C member 21 (DNAJC21) from Bos taurus (Bovine).